The chain runs to 26 residues: Guentherin (26 aa).

In terms of tissue distribution, expressed by the skin glands.

The protein localises to the secreted. In terms of biological role, antimicrobial peptide. Active against the Gram-positive bacteria S.aureus FDA209P (MIC=35.5 ug/ml) and B.subtilis ATCC 6633 (MIC&gt;64 ug/ml), but not active against the Gram-negative bacterium E.coli or the fungus C.albicans. The polypeptide is Guentherin (Sylvirana guentheri (Gunther's frog)).